We begin with the raw amino-acid sequence, 600 residues long: Oligopeptide-binding protein OppA (600 aa).

Residues 1 to 22 (MNKLKVTLLASSVVLAATLLSA) form the signal peptide. A lipid anchor (N-palmitoyl cysteine) is attached at Cys23. A lipid anchor (S-diacylglycerol cysteine) is attached at Cys23.

Belongs to the bacterial solute-binding protein 5 family. The complex is composed of two ATP-binding proteins (OppD and OppF), two transmembrane proteins (OppB and OppC) and a solute-binding protein (OppA).

The protein localises to the cell membrane. Part of the ABC transporter complex OppABCDF involved in the uptake of oligopeptides. In Lactococcus lactis subsp. cremoris (strain SK11), this protein is Oligopeptide-binding protein OppA.